We begin with the raw amino-acid sequence, 229 residues long: Transmembrane protein 182 (229 aa).

A signal peptide spans 1 to 26; sequence MRLNVAVFFGALFGALGVLLFLVAFG. Over 27–114 the chain is Extracellular; sequence SDYWLLATEV…SYDSAIIYRG (88 aa). Asn-47 carries N-linked (GlcNAc...) asparagine glycosylation. Residues 49–59 are interaction with ITGB1; that stretch reads TFHHEGFFWRC. N-linked (GlcNAc...) asparagine glycans are attached at residues Asn-68, Asn-85, and Asn-102. The chain crosses the membrane as a helical span at residues 115–135; the sequence is FWAVLLLLGVVAALTASFLII. Over 136–153 the chain is Cytoplasmic; sequence CAAPFSSHFLYKAGGGSY. Residues 154–174 form a helical membrane-spanning segment; the sequence is IASGVLFSLVVILYVIWVQAV. The Extracellular segment spans residues 175–200; sequence ADMESYRALRMRDCWEFTPSILYGWS. A helical membrane pass occupies residues 201-221; sequence FFLAPAGVFFSLLAGLLFLVV. Topologically, residues 222–229 are cytoplasmic; it reads GRHIQIHH.

The protein belongs to the TMEM182 family. As to quaternary structure, interacts with ITGB1. Highly expressed in white adipose tissues (WAT), with 10-fold to 20-fold higher levels than in brown adipose tissue (BAT). Also expressed in skeletal muscle, heart and lung. Lower relative levels of expression in kidney, spleen, testis, brain and liver.

Its subcellular location is the cell membrane. In terms of biological role, negatively regulates myogenesis and skeletal muscle regeneration via its association with ITGB1. Modulates ITGB1 activation by decreasing ITGB1-LAMB1 interaction and inhibiting ITGB1-mediated intracellular signaling during myogenesis. This Mus musculus (Mouse) protein is Transmembrane protein 182 (Tmem182).